The primary structure comprises 158 residues: Methylglyoxal synthase (158 aa).

Residues 1-158 (MRRKLRIALV…AFEESLKVKE (158 aa)) enclose the MGS-like domain. Residues histidine 12, lysine 16, 38 to 41 (TGTT), and 63 to 64 (SG) contribute to the substrate site. The active-site Proton donor/acceptor is aspartate 69. Substrate is bound at residue histidine 96.

This sequence belongs to the methylglyoxal synthase family.

It catalyses the reaction dihydroxyacetone phosphate = methylglyoxal + phosphate. Functionally, catalyzes the formation of methylglyoxal from dihydroxyacetone phosphate. The polypeptide is Methylglyoxal synthase (Treponema socranskii).